A 103-amino-acid chain; its full sequence is Small ribosomal subunit protein uS10 (103 aa).

Belongs to the universal ribosomal protein uS10 family. In terms of assembly, part of the 30S ribosomal subunit.

In terms of biological role, involved in the binding of tRNA to the ribosomes. This is Small ribosomal subunit protein uS10 from Buchnera aphidicola subsp. Cinara cedri (strain Cc).